A 189-amino-acid chain; its full sequence is GTP cyclohydrolase 1 (189 aa).

The Zn(2+) site is built by Cys-78, His-81, and Cys-150.

It belongs to the GTP cyclohydrolase I family. In terms of assembly, toroid-shaped homodecamer, composed of two pentamers of five dimers.

It carries out the reaction GTP + H2O = 7,8-dihydroneopterin 3'-triphosphate + formate + H(+). The protein operates within cofactor biosynthesis; 7,8-dihydroneopterin triphosphate biosynthesis; 7,8-dihydroneopterin triphosphate from GTP: step 1/1. The polypeptide is GTP cyclohydrolase 1 (Listeria monocytogenes serovar 1/2a (strain ATCC BAA-679 / EGD-e)).